The chain runs to 180 residues: Adenine phosphoribosyltransferase (180 aa).

Residue Ser-2 is modified to N-acetylserine. Residues Ser-15 and Ser-30 each carry the phosphoserine modification. Position 60 is a phosphotyrosine (Tyr-60). A Phosphoserine modification is found at Ser-66. Lys-114 is modified (N6-acetyllysine). Thr-135 carries the post-translational modification Phosphothreonine.

The protein belongs to the purine/pyrimidine phosphoribosyltransferase family. Homodimer.

It localises to the cytoplasm. It catalyses the reaction AMP + diphosphate = 5-phospho-alpha-D-ribose 1-diphosphate + adenine. It functions in the pathway purine metabolism; AMP biosynthesis via salvage pathway; AMP from adenine: step 1/1. In terms of biological role, catalyzes a salvage reaction resulting in the formation of AMP, that is energically less costly than de novo synthesis. This is Adenine phosphoribosyltransferase from Stochomys longicaudatus (Target rat).